The following is a 273-amino-acid chain: Formamidopyrimidine-DNA glycosylase (273 aa).

Pro-2 (schiff-base intermediate with DNA) is an active-site residue. Glu-3 (proton donor) is an active-site residue. Lys-57 (proton donor; for beta-elimination activity) is an active-site residue. DNA-binding residues include His-90, Arg-109, and Lys-150. The FPG-type zinc-finger motif lies at 235–269; it reads KVYGRAGKECPVCSSKIEEEKIGQRNSFWCGKCQF. Arg-259 serves as the catalytic Proton donor; for delta-elimination activity.

It belongs to the FPG family. Monomer. It depends on Zn(2+) as a cofactor.

It carries out the reaction Hydrolysis of DNA containing ring-opened 7-methylguanine residues, releasing 2,6-diamino-4-hydroxy-5-(N-methyl)formamidopyrimidine.. The catalysed reaction is 2'-deoxyribonucleotide-(2'-deoxyribose 5'-phosphate)-2'-deoxyribonucleotide-DNA = a 3'-end 2'-deoxyribonucleotide-(2,3-dehydro-2,3-deoxyribose 5'-phosphate)-DNA + a 5'-end 5'-phospho-2'-deoxyribonucleoside-DNA + H(+). In terms of biological role, involved in base excision repair of DNA damaged by oxidation or by mutagenic agents. Acts as a DNA glycosylase that recognizes and removes damaged bases. Has a preference for oxidized purines, such as 7,8-dihydro-8-oxoguanine (8-oxoG). Has AP (apurinic/apyrimidinic) lyase activity and introduces nicks in the DNA strand. Cleaves the DNA backbone by beta-delta elimination to generate a single-strand break at the site of the removed base with both 3'- and 5'-phosphates. The polypeptide is Formamidopyrimidine-DNA glycosylase (Aliivibrio fischeri (strain MJ11) (Vibrio fischeri)).